The chain runs to 109 residues: uncharacterized protein (109 aa).

A helical transmembrane segment spans residues 29-49 (ITIIITLVIIFIIFTLIILYF).

It is found in the membrane. This is an uncharacterized protein from Sputnik virophage.